Reading from the N-terminus, the 237-residue chain is Large ribosomal subunit protein uL3 (237 aa).

2 disordered regions span residues 133–155 (ASHG…DPGK) and 213–237 (PENA…EGAE). The segment covering 135-150 (HGNSITHRSHGSTGQR) has biased composition (polar residues). Gln151 carries the post-translational modification N5-methylglutamine. The span at 220 to 237 (AGLRAGAKAEAAATEGAE) shows a compositional bias: low complexity.

This sequence belongs to the universal ribosomal protein uL3 family. As to quaternary structure, part of the 50S ribosomal subunit. Forms a cluster with proteins L14 and L19. In terms of processing, methylated by PrmB.

In terms of biological role, one of the primary rRNA binding proteins, it binds directly near the 3'-end of the 23S rRNA, where it nucleates assembly of the 50S subunit. In Brucella canis (strain ATCC 23365 / NCTC 10854 / RM-666), this protein is Large ribosomal subunit protein uL3.